The sequence spans 298 residues: U1 small nuclear ribonucleoprotein A (298 aa).

2 consecutive RRM domains span residues 2-113 (SALY…KART) and 227-298 (KVLL…GFAK).

This sequence belongs to the RRM U1 A/B'' family. Component of the spliceosome where it is associated with snRNP U1.

The protein localises to the nucleus. In terms of biological role, involved in nuclear mRNA splicing. The principal role of the U1A is to help fold or maintain U1 RNA in an active configuration. It is the first snRNP to interact with pre-mRNA. This interaction is required for the subsequent binding of U2 snRNP and the U4/U6/U5 tri-snRNP. This chain is U1 small nuclear ribonucleoprotein A (MUD1), found in Saccharomyces cerevisiae (strain ATCC 204508 / S288c) (Baker's yeast).